A 528-amino-acid chain; its full sequence is Abrin-d (528 aa).

Gln-1 is subject to Pyrrolidone carboxylic acid. Residue Glu-164 is part of the active site. A glycan (N-linked (GlcNAc...) asparagine) is linked at Asn-200. 3 disulfides stabilise this stretch: Cys-247–Cys-269, Cys-286–Cys-305, and Cys-329–Cys-346. Residues 273 to 400 (YEPTVRIGGR…YLMRQGWRTG (128 aa)) enclose the Ricin B-type lectin 1 domain. One copy of the 1-alpha repeat lies at 283–325 (DGMCVDVYDDGYHNGNRIIAWKCKDRLEENQLWTLKSDLTIRS). The 1-beta repeat unit spans residues 326–366 (NGKCLTTEGYAPGNYVMIYDCTSAVAEATYWEIWDNGTIIN). N-linked (GlcNAc...) asparagine glycans are attached at residues Asn-361 and Asn-401. One copy of the 1-gamma repeat lies at 369 to 401 (SALVLSAESSSMGGTLTVQTNEYLMRQGWRTGN). In terms of domain architecture, Ricin B-type lectin 2 spans 403–527 (TSPFVTSISG…GKPNQIWLTL (125 aa)). The stretch at 414–449 (SDLCMQAQGSNVWLADCDNNKKEQQWALYTDGSIRS) is one 2-alpha repeat. Disulfide bonds link Cys-417–Cys-430 and Cys-456–Cys-473. The stretch at 453-492 (TNNCLTSKDHKQGSPIVLMACSNGWASQRWLFKNDGSIYS) is one 2-beta repeat. The stretch at 495–528 (DDMVMDVKGSDPSLKQIILWPYTGKPNQIWLTLF) is one 2-gamma repeat.

The protein in the N-terminal section; belongs to the ribosome-inactivating protein family. Type 2 RIP subfamily. In terms of assembly, disulfide-linked dimer of A and B chains.

It carries out the reaction Endohydrolysis of the N-glycosidic bond at one specific adenosine on the 28S rRNA.. The A chain is responsible for inhibiting protein synthesis through the catalytic inactivation of 60S ribosomal subunits by removing adenine from position 4,324 of 28S rRNA. Functionally, the B chain is a galactose-specific lectin that facilitates the binding of abrin to the cell membrane that precedes endocytosis. In Abrus precatorius (Indian licorice), this protein is Abrin-d.